The primary structure comprises 519 residues: Cytochrome P450 52-E3 (519 aa).

The chain crosses the membrane as a helical span at residues 10 to 30 (VLGGISVSFLLAYQAIYFYFI). Heme is bound at residue Cys-461.

Belongs to the cytochrome P450 family. The cofactor is heme.

The protein localises to the membrane. It catalyses the reaction an omega-methyl-long-chain fatty acid + reduced [NADPH--hemoprotein reductase] + O2 = an omega-hydroxy-long-chain fatty acid + oxidized [NADPH--hemoprotein reductase] + H2O + H(+). The enzyme catalyses (9Z)-octadecenoate + reduced [NADPH--hemoprotein reductase] + O2 = 18-hydroxy-(9Z)-octadecenoate + oxidized [NADPH--hemoprotein reductase] + H2O + H(+). It carries out the reaction hexadecanoate + reduced [NADPH--hemoprotein reductase] + O2 = 16-hydroxyhexadecanoate + oxidized [NADPH--hemoprotein reductase] + H2O + H(+). The catalysed reaction is (9Z)-hexadecenoate + reduced [NADPH--hemoprotein reductase] + O2 = (9Z)-16-hydroxyhexadec-9-enoate + oxidized [NADPH--hemoprotein reductase] + H2O + H(+). Its function is as follows. Catalyzes the terminal (at the omega-position) hydroxylation of a fatty acid. Probably involved in alkane metabolism. Has minor activity toward myristic acid, palmitic acid, palmitoleic acid and oleic acid. This chain is Cytochrome P450 52-E3, found in Starmerella bombicola (Yeast).